A 98-amino-acid polypeptide reads, in one-letter code: Integration host factor subunit beta (98 aa).

Belongs to the bacterial histone-like protein family. As to quaternary structure, heterodimer of an alpha and a beta chain.

Functionally, this protein is one of the two subunits of integration host factor, a specific DNA-binding protein that functions in genetic recombination as well as in transcriptional and translational control. The sequence is that of Integration host factor subunit beta from Pseudomonas entomophila (strain L48).